Reading from the N-terminus, the 332-residue chain is Anthranilate phosphoribosyltransferase (332 aa).

5-phospho-alpha-D-ribose 1-diphosphate contacts are provided by residues Gly-78, 81–82 (GD), Ser-86, 88–91 (NIST), 106–114 (KHGNKSITS), and Ser-118. Residue Gly-78 participates in anthranilate binding. Ser-90 contacts Mg(2+). Asn-109 is a binding site for anthranilate. Residue Arg-163 coordinates anthranilate. Asp-222 and Glu-223 together coordinate Mg(2+).

It belongs to the anthranilate phosphoribosyltransferase family. In terms of assembly, homodimer. It depends on Mg(2+) as a cofactor.

It carries out the reaction N-(5-phospho-beta-D-ribosyl)anthranilate + diphosphate = 5-phospho-alpha-D-ribose 1-diphosphate + anthranilate. Its pathway is amino-acid biosynthesis; L-tryptophan biosynthesis; L-tryptophan from chorismate: step 2/5. Catalyzes the transfer of the phosphoribosyl group of 5-phosphorylribose-1-pyrophosphate (PRPP) to anthranilate to yield N-(5'-phosphoribosyl)-anthranilate (PRA). The protein is Anthranilate phosphoribosyltransferase of Staphylococcus aureus (strain Mu3 / ATCC 700698).